The primary structure comprises 284 residues: MSAEQQAVVSAEQQAVVSAEQPAVVSADQPAVTWTVVVPVKVTSQAKTRLAGDLSPTQRVELVRAMVVDTVAAARATPTVDRVVVVTDDPDVVADLSADEPAGTDAERRADPSAENRASTSAQHPCLRAHLDVVPEPSPAAGLNAAIRAGVASARSGGGLAAVSVAVLLGDLPALRPGDLGAALEAASAHHRAVVTDADGSGTTLLTARSGVELYPAFGPGSAAEHAARGHVVLDVADVPAVSGLRQDVDLARDLAAVAALGPGPRTTEVLDRWARLGEGSSAA.

A disordered region spans residues 94–123 (ADLSADEPAGTDAERRADPSAENRASTSAQ). A compositionally biased stretch (basic and acidic residues) spans 105–114 (DAERRADPSA). Thr-203, Gly-219, and Ser-222 together coordinate phosphoenolpyruvate.

This sequence belongs to the CofC family.

It carries out the reaction phosphoenolpyruvate + GTP + H(+) = enolpyruvoyl-2-diphospho-5'-guanosine + diphosphate. It functions in the pathway cofactor biosynthesis; coenzyme F420 biosynthesis. Guanylyltransferase that catalyzes the activation of phosphoenolpyruvate (PEP) as enolpyruvoyl-2-diphospho-5'-guanosine, via the condensation of PEP with GTP. It is involved in the biosynthesis of coenzyme F420, a hydride carrier cofactor. This Sanguibacter keddieii (strain ATCC 51767 / DSM 10542 / NCFB 3025 / ST-74) protein is Phosphoenolpyruvate guanylyltransferase.